The primary structure comprises 62 residues: Conotoxin Pn-B02 (62 aa).

An N-terminal signal peptide occupies residues 1-19; it reads MRCLPVFIILLLLIASAPS. Residues 20–49 constitute a propeptide that is removed on maturation; sequence FDALPKTEDNVPLSSFHDNLKRTRRIHLNI. The residue at position 61 (Ala-61) is an Alanine amide.

This sequence belongs to the conotoxin T superfamily. Post-translationally, contains 2 disulfide bonds that can be either 'C1-C3, C2-C4' or 'C1-C4, C2-C3', since these disulfide connectivities have been observed for conotoxins with cysteine framework V (for examples, see AC P0DQQ7 and AC P81755). As to expression, expressed by the venom duct.

Its subcellular location is the secreted. The polypeptide is Conotoxin Pn-B02 (Conus pennaceus (Feathered cone)).